The primary structure comprises 548 residues: Tyrosine-protein phosphatase non-receptor type 61F (548 aa).

Residues 1-525 (MSEQKTSGSG…KQLAAKKRRS (525 aa)) are Cytoplasmic-facing. Positions 33–296 (FYKEICETCD…DFSYQAIIEG (264 aa)) constitute a Tyrosine-protein phosphatase domain. Residues 46 to 65 (KEKQFSTSESERHTNRGLNR) are disordered. Ser83 carries the phosphoserine modification. Tyr86 is subject to Phosphotyrosine. Substrate contacts are provided by residues Asp203, 237-243 (CSAGIGR), and Gln281. Cys237 (phosphocysteine intermediate) is an active-site residue. Short sequence motifs (PXXP motif (SH3-binding)) lie at residues 327–330 (PPLP), 339–342 (PLAP), and 394–397 (PPLP). The tract at residues 386–517 (EVADSRPLPP…RKQRENEDKQ (132 aa)) is disordered. Over residues 404-428 (SDSDEDYLLDDDDEDDTDEDEEYET) the composition is skewed to acidic residues. 2 short sequence motifs (PXXP motif (SH3-binding)) span residues 459–462 (PAVP) and 480–483 (PASP). Residues 502-517 (KVNDMKRKQRENEDKQ) show a composition bias toward basic and acidic residues. Residues 526 to 545 (LLTYIAAGVVVGVICAYAYT) traverse the membrane as a helical segment. The Extracellular segment spans residues 546–548 (KLG).

This sequence belongs to the protein-tyrosine phosphatase family. Non-receptor class 1 subfamily. Interacts (via C-terminus) with dock/dreadlocks; this interaction is independent of insulin stimulation and is required for dephosphorylation of the insulin-like receptor InR.

Its subcellular location is the cytoplasm. It localises to the membrane. It is found in the endomembrane system. The protein resides in the nucleus. The catalysed reaction is O-phospho-L-tyrosyl-[protein] + H2O = L-tyrosyl-[protein] + phosphate. In terms of biological role, non-receptor protein tyrosine phosphatase. Required for maintaining dock/dreadlocks in its non-phosphorylated state. Negative regulator of InR/insulin-like receptor signaling through dephosphorylation of tyrosines when recruited by dock/dreadlocks. This is Tyrosine-protein phosphatase non-receptor type 61F from Drosophila melanogaster (Fruit fly).